A 121-amino-acid polypeptide reads, in one-letter code: Large ribosomal subunit protein bL12 (121 aa).

Belongs to the bacterial ribosomal protein bL12 family. As to quaternary structure, homodimer. Part of the ribosomal stalk of the 50S ribosomal subunit. Forms a multimeric L10(L12)X complex, where L10 forms an elongated spine to which 2 to 4 L12 dimers bind in a sequential fashion. Binds GTP-bound translation factors.

Functionally, forms part of the ribosomal stalk which helps the ribosome interact with GTP-bound translation factors. Is thus essential for accurate translation. The chain is Large ribosomal subunit protein bL12 from Clostridium beijerinckii (strain ATCC 51743 / NCIMB 8052) (Clostridium acetobutylicum).